The chain runs to 309 residues: 4-diphosphocytidyl-2-C-methyl-D-erythritol kinase (309 aa).

K11 is an active-site residue. Residue 94–104 (PVAAGLAGGSA) participates in ATP binding. D136 is an active-site residue.

Belongs to the GHMP kinase family. IspE subfamily.

The catalysed reaction is 4-CDP-2-C-methyl-D-erythritol + ATP = 4-CDP-2-C-methyl-D-erythritol 2-phosphate + ADP + H(+). It functions in the pathway isoprenoid biosynthesis; isopentenyl diphosphate biosynthesis via DXP pathway; isopentenyl diphosphate from 1-deoxy-D-xylulose 5-phosphate: step 3/6. Its function is as follows. Catalyzes the phosphorylation of the position 2 hydroxy group of 4-diphosphocytidyl-2C-methyl-D-erythritol. In Synechococcus sp. (strain JA-3-3Ab) (Cyanobacteria bacterium Yellowstone A-Prime), this protein is 4-diphosphocytidyl-2-C-methyl-D-erythritol kinase.